The following is a 482-amino-acid chain: Cysteine--tRNA ligase (482 aa).

Cys29 is a binding site for Zn(2+). The 'HIGH' region signature appears at 31–41 (PTVYDFAHIGN). Zn(2+) is bound by residues Cys224, His249, and Glu253. Positions 282 to 286 (KMSKS) match the 'KMSKS' region motif. Residue Lys285 coordinates ATP.

This sequence belongs to the class-I aminoacyl-tRNA synthetase family. In terms of assembly, monomer. The cofactor is Zn(2+).

Its subcellular location is the cytoplasm. The catalysed reaction is tRNA(Cys) + L-cysteine + ATP = L-cysteinyl-tRNA(Cys) + AMP + diphosphate. The chain is Cysteine--tRNA ligase from Nitrobacter hamburgensis (strain DSM 10229 / NCIMB 13809 / X14).